A 278-amino-acid chain; its full sequence is Sulfur carrier protein FdhD (278 aa).

Residue Cys117 is the Cysteine persulfide intermediate of the active site.

It belongs to the FdhD family.

It is found in the cytoplasm. Required for formate dehydrogenase (FDH) activity. Acts as a sulfur carrier protein that transfers sulfur from IscS to the molybdenum cofactor prior to its insertion into FDH. The protein is Sulfur carrier protein FdhD of Variovorax paradoxus (strain S110).